Reading from the N-terminus, the 127-residue chain is MSLSHGTGAPAISTPLTLRPPPDNTKAILTIAIGIAASLVFFMLTRNNLPHVGDNIHSLPHGGSYIDGTKSINYRPPASRYPSSNLLAFAPPILAAVLFFLTQPYLATRRSRCVRCFVVHGACTNHT.

The Cytoplasmic portion of the chain corresponds to 1–24 (MSLSHGTGAPAISTPLTLRPPPDN). The chain crosses the membrane as a helical span at residues 25–45 (TKAILTIAIGIAASLVFFMLT). Over 46–85 (RNNLPHVGDNIHSLPHGGSYIDGTKSINYRPPASRYPSSN) the chain is Lumenal. Residues 86–106 (LLAFAPPILAAVLFFLTQPYL) form a helical membrane-spanning segment. Residues 107–127 (ATRRSRCVRCFVVHGACTNHT) lie on the Cytoplasmic side of the membrane.

Belongs to the Tymovirales TGBp2 protein family.

It is found in the host endoplasmic reticulum membrane. Functionally, plays a role in viral cell-to-cell propagation, by facilitating genome transport to neighboring plant cells through plasmosdesmata,. This chain is Movement protein TGB2, found in Setaria italica (Foxtail millet).